Consider the following 207-residue polypeptide: Small ribosomal subunit protein uS4 (207 aa).

The region spanning 97–165 (SRLDNLVFRM…VKLALESKAV (69 aa)) is the S4 RNA-binding domain.

Belongs to the universal ribosomal protein uS4 family. In terms of assembly, part of the 30S ribosomal subunit. Contacts protein S5. The interaction surface between S4 and S5 is involved in control of translational fidelity.

One of the primary rRNA binding proteins, it binds directly to 16S rRNA where it nucleates assembly of the body of the 30S subunit. In terms of biological role, with S5 and S12 plays an important role in translational accuracy. In Mycoplasmoides gallisepticum (strain R(low / passage 15 / clone 2)) (Mycoplasma gallisepticum), this protein is Small ribosomal subunit protein uS4.